The chain runs to 302 residues: MDEYAKIEKIGEGTYGVVYKGVHKATGQIVAMKKIRLENEEEGVPSTAIREISLLKELQHPNIVCLLDVLMQDSRLYLIFEFLSMDLKKYLDSIPSGQYLEAMLVKSYLYQILQGIIFCHARRVLHRDLKPQNLLIDSKGVIKLADFGLARAFGIPVRVYTHEVVTLWYRAPEVLLGSVRYSTPVDVWSIGTIFAEIASKKPLFHGDSEIDQLFRISELWGTPNNEVWPEVESLQDYKNTFPKWKGGSLAANVKNIDKEGLDLLAKMLVYDPAKRISARKALLHPYFDDLDKSSLPANQIRN.

The 284-residue stretch at 4–287 (YAKIEKIGEG…ARKALLHPYF (284 aa)) folds into the Protein kinase domain. Residues 10–18 (IGEGTYGVV) and lysine 33 contribute to the ATP site. Position 14 is a phosphothreonine (threonine 14). Tyrosine 15 carries the post-translational modification Phosphotyrosine; by wee1 and wee2. The Proton acceptor role is filled by aspartate 128. A Phosphothreonine; by cak modification is found at threonine 161.

The protein belongs to the protein kinase superfamily. CMGC Ser/Thr protein kinase family. CDC2/CDKX subfamily. As to quaternary structure, forms a stable but non-covalent complex with a regulatory subunit and with a cyclin. Phosphorylation at Tyr-15 by wee1 and wee2 inhibits the protein kinase activity and acts negative regulator of entry into mitosis (G2 to M transition).

It is found in the nucleus. The protein localises to the cytoplasm. The protein resides in the cytoskeleton. It localises to the microtubule organizing center. Its subcellular location is the centrosome. It catalyses the reaction L-seryl-[protein] + ATP = O-phospho-L-seryl-[protein] + ADP + H(+). It carries out the reaction L-threonyl-[protein] + ATP = O-phospho-L-threonyl-[protein] + ADP + H(+). The enzyme catalyses [DNA-directed RNA polymerase] + ATP = phospho-[DNA-directed RNA polymerase] + ADP + H(+). Phosphorylation at Thr-14 or Tyr-15 inactivates the enzyme, while phosphorylation at Thr-161 activates it. Plays a key role in the control of the eukaryotic cell cycle by modulating the centrosome cycle as well as mitotic onset; promotes G2-M transition via association with multiple interphase cyclins. During G2 and early mitosis, CDC25A/B/C-mediated dephosphorylation activates CDK1/cyclin complexes which phosphorylate several substrates that trigger at least centrosome separation, Golgi dynamics, nuclear envelope breakdown and chromosome condensation. Once chromosomes are condensed and aligned at the metaphase plate, CDK1 activity is switched off by WEE1- and PKMYT1-mediated phosphorylation to allow sister chromatid separation, chromosome decondensation, reformation of the nuclear envelope and cytokinesis. Catalyzes lamin (LMNA, LMNB1 and LMNB2) phosphorylation at the onset of mitosis, promoting nuclear envelope breakdown. This chain is Cyclin-dependent kinase 1 (CDK1), found in Rana dybowskii (Dybovsky's frog).